The chain runs to 132 residues: MAYLGKVYKFDREENFDGFLKSIGLSEEQVQKYLQYKPSSQLVKEGDKYKYISVSSDGTKETVFESGVETDDVVQGGLPIKTTYTVDGNTVTQVVNSAQGSATFKREYNGDELKVTITSSEWDGVAYRYYKA.

A fatty acid-binding positions include Arg-106 and 128–130 (RYY).

This sequence belongs to the calycin superfamily. Fatty-acid binding protein (FABP) family. Monomer. As to expression, midgut.

The protein localises to the cytoplasm. In terms of biological role, binds fatty acids in a 1:1 molar ratio. This Manduca sexta (Tobacco hawkmoth) protein is Fatty acid-binding protein 1 (MFB1).